A 321-amino-acid chain; its full sequence is Anthranilate phosphoribosyltransferase (321 aa).

5-phospho-alpha-D-ribose 1-diphosphate-binding positions include Gly72, 75-76, Thr80, 82-85, 99-107, and Ser111; these read GD, NVST, and KHGNVSITS. Gly72 contributes to the anthranilate binding site. Ser84 provides a ligand contact to Mg(2+). Asn102 lines the anthranilate pocket. Residue Arg157 participates in anthranilate binding. Asp216 and Glu217 together coordinate Mg(2+).

The protein belongs to the anthranilate phosphoribosyltransferase family. As to quaternary structure, homodimer. Requires Mg(2+) as cofactor.

It carries out the reaction N-(5-phospho-beta-D-ribosyl)anthranilate + diphosphate = 5-phospho-alpha-D-ribose 1-diphosphate + anthranilate. It participates in amino-acid biosynthesis; L-tryptophan biosynthesis; L-tryptophan from chorismate: step 2/5. Catalyzes the transfer of the phosphoribosyl group of 5-phosphorylribose-1-pyrophosphate (PRPP) to anthranilate to yield N-(5'-phosphoribosyl)-anthranilate (PRA). The chain is Anthranilate phosphoribosyltransferase from Methanococcus maripaludis (strain C7 / ATCC BAA-1331).